A 185-amino-acid polypeptide reads, in one-letter code: Peptidyl-tRNA hydrolase (185 aa).

TRNA is bound at residue Tyr-14. His-19 acts as the Proton acceptor in catalysis. Residues Phe-64, Asn-66, and Asn-112 each contribute to the tRNA site.

The protein belongs to the PTH family. In terms of assembly, monomer.

Its subcellular location is the cytoplasm. The enzyme catalyses an N-acyl-L-alpha-aminoacyl-tRNA + H2O = an N-acyl-L-amino acid + a tRNA + H(+). Functionally, hydrolyzes ribosome-free peptidyl-tRNAs (with 1 or more amino acids incorporated), which drop off the ribosome during protein synthesis, or as a result of ribosome stalling. Catalyzes the release of premature peptidyl moieties from peptidyl-tRNA molecules trapped in stalled 50S ribosomal subunits, and thus maintains levels of free tRNAs and 50S ribosomes. The protein is Peptidyl-tRNA hydrolase of Lactobacillus gasseri (strain ATCC 33323 / DSM 20243 / BCRC 14619 / CIP 102991 / JCM 1131 / KCTC 3163 / NCIMB 11718 / NCTC 13722 / AM63).